A 697-amino-acid chain; its full sequence is MSHFLFEIGFEEMPARFLPGLVDEVKKLFAEGLTQAKVDCGTIAAFATPRRLVVSVPDLAAAARREEEVVSGPPEKVGFDAAGAPTKAAEGFAKGQGLDVSAVFVMDTPKGRYLALRKTTGGEAAIELLPALCLEAVKKLSFPKRMRWGSREFAFGRPVHWFLALLDDAVVPFQFDDITSGRATYGQRIMGPGPFEVPTAAAYFDIIRDKGKVVLDAREREGIVRSQAEALAKEAGGTAVINPALLAEVTGLTEHPVVLLGRFDPKFLDVPREVLITSMESHQKSFAVEDGKGGLLPVFLTTLGLVPGNVELVRRGWQRVLTARLEDARFFWEADLSASLETWQKKLENVVFLAGLGSMRDKGKRLERLCGLIAEQAGKPEIMLEASQAGGLAKVDLVSDMVGEFAELQGIMGGIYSRRKGQSKTASRAVAEQYLPAGPDSPVPATLAGAILSIADKADTLAGCFGLDMAPTGAADPYALRRAALGICRVVIEHGLRLDLMELLQGAIDGYGEVKFKVDRTHVLAKLLDFFGQRLKAYFTGQGYDTLVVEAALGASYTDIAALSARLSALAGFAAKPDFDQAVLTFKRAANIIRKQGVGAGVPLTGAVKAALLEEQAEKDLAAVCQDVFPRFDALFDAGDYGAVLELLYELRPSVDAFFDNVMVMCDDMDMRLNRLNLLKSLVDRLGRVADFAALQV.

Belongs to the class-II aminoacyl-tRNA synthetase family. Tetramer of two alpha and two beta subunits.

Its subcellular location is the cytoplasm. It catalyses the reaction tRNA(Gly) + glycine + ATP = glycyl-tRNA(Gly) + AMP + diphosphate. This chain is Glycine--tRNA ligase beta subunit, found in Solidesulfovibrio magneticus (strain ATCC 700980 / DSM 13731 / RS-1) (Desulfovibrio magneticus).